The primary structure comprises 717 residues: Delta-1-pyrroline-5-carboxylate synthase (717 aa).

The interval 1 to 296 is glutamate 5-kinase; sequence MDAVDSTRAF…WAPVGDVGAR (296 aa). Positions 60, 157, and 176 each coordinate substrate. ATP contacts are provided by residues 196-197 and 236-242; these read SD and RGGMTAK. Residues 297–717 form a gamma-glutamyl phosphate reductase region; the sequence is DMAVAARESS…YTHKDLTSHA (421 aa).

This sequence in the N-terminal section; belongs to the glutamate 5-kinase family. In the C-terminal section; belongs to the gamma-glutamyl phosphate reductase family. As to expression, expressed at high levels in leaves and is inducible in roots subjected to salt stress.

It catalyses the reaction L-glutamate + ATP = L-glutamyl 5-phosphate + ADP. It carries out the reaction L-glutamate 5-semialdehyde + phosphate + NADP(+) = L-glutamyl 5-phosphate + NADPH + H(+). It participates in amino-acid biosynthesis; L-proline biosynthesis; L-glutamate 5-semialdehyde from L-glutamate: step 1/2. The protein operates within amino-acid biosynthesis; L-proline biosynthesis; L-glutamate 5-semialdehyde from L-glutamate: step 2/2. Its activity is regulated as follows. Feedback regulated by proline. Its function is as follows. P5CS plays a key role in proline biosynthesis, leading to osmoregulation in plants. The protein is Delta-1-pyrroline-5-carboxylate synthase of Actinidia deliciosa (Kiwi).